Consider the following 42-residue polypeptide: Large ribosomal subunit protein bL36 (42 aa).

Belongs to the bacterial ribosomal protein bL36 family.

The sequence is that of Large ribosomal subunit protein bL36 from Ehrlichia ruminantium (strain Gardel).